A 130-amino-acid polypeptide reads, in one-letter code: Protein Wnt-9 (130 aa).

Ser1 is lipidated: O-palmitoleoyl serine; by PORCN. The interval 41-69 (AGERTIARSRRRPREQRGQRRPKVSDGAL) is disordered. The segment covering 47 to 62 (ARSRRRPREQRGQRRP) has biased composition (basic residues). N-linked (GlcNAc...) asparagine glycosylation is present at Asn97. Residues Cys100 and Cys111 are joined by a disulfide bond.

It belongs to the Wnt family. Post-translationally, palmitoleoylation is required for efficient binding to frizzled receptors. Depalmitoleoylation leads to Wnt signaling pathway inhibition.

It localises to the secreted. Its subcellular location is the extracellular space. It is found in the extracellular matrix. In terms of biological role, ligand for members of the frizzled family of seven transmembrane receptors. Probable developmental protein. May be a signaling molecule which affects the development of discrete regions of tissues. Is likely to signal over only few cell diameters. In Eptatretus stoutii (Pacific hagfish), this protein is Protein Wnt-9 (WNT-9).